The sequence spans 320 residues: GRAM domain-containing protein 2A (320 aa).

The disordered stretch occupies residues 33-56 (TEKPGKVQEPPDDGSLHWSEGSKG). The region spanning 74–141 (QQYHKLFKDI…VSVQLIKKHK (68 aa)) is the GRAM domain. Residues 278-298 (LLKVIFVMICFLVLSSSYLAF) form a helical membrane-spanning segment.

Phosphorylated.

It is found in the endoplasmic reticulum membrane. The protein localises to the cell membrane. In terms of biological role, participates in the organization ofendoplasmic reticulum-plasma membrane contact sites (EPCS) with pleiotropic functions including STIM1 recruitment and calcium homeostasis. Constitutive tether that co-localize with ESYT2/3 tethers at endoplasmic reticulum-plasma membrane contact sites in a phosphatidylinositol lipid-dependent manner. Pre-marks the subset of phosphtidylinositol 4,5-biphosphate (PI(4,5)P2)-enriched EPCS destined for the store operated calcium entry pathway (SOCE). This chain is GRAM domain-containing protein 2A, found in Mus musculus (Mouse).